We begin with the raw amino-acid sequence, 453 residues long: UDP-glycosyltransferase 74E2 (453 aa).

Catalysis depends on H17, which acts as the Proton acceptor. Position 17 (H17) interacts with an anthocyanidin. The active-site Charge relay is D109. Positions 131, 334, 349, 352, 353, 354, 357, 373, and 374 each coordinate UDP-alpha-D-glucose.

It belongs to the UDP-glycosyltransferase family. Expressed in roots, cotyledons and leaf hydathodes.

The catalysed reaction is (indol-3-yl)butanoate + UDP-alpha-D-glucose = 4-(indol-3-yl)butanoyl-beta-D-glucose + UDP. In terms of biological role, glucosyltransferase that acts on the auxin indole-3-butyric acid (IBA). Mediates abiotic stress responses and stress-induced morphological adaptations by regulating auxin homeostasis. Possesses low activity in vitro on jasmonate (JA) and the synthetic auxin analog naphthaleneacetic acid (NAA). This Arabidopsis thaliana (Mouse-ear cress) protein is UDP-glycosyltransferase 74E2 (UGT74E2).